A 188-amino-acid chain; its full sequence is Protein YecM (188 aa).

The protein to H.influenzae HI_1582/HI_1581.

This chain is Protein YecM (yecM), found in Escherichia coli (strain K12).